The sequence spans 543 residues: Neurofilament light polypeptide (543 aa).

S2 bears the N-acetylserine mark. The interval 2–92 (SSFSYEPYYS…LKSIRTQEKA (91 aa)) is head. An O-linked (GlcNAc) threonine glycan is attached at T21. R23 carries the asymmetric dimethylarginine; alternate modification. An Omega-N-methylarginine; alternate modification is found at R23. O-linked (GlcNAc) serine glycosylation is present at S27. R30 carries the omega-N-methylarginine modification. Phosphotyrosine is present on Y43. Phosphoserine occurs at positions 56, 67, and 103. One can recognise an IF rod domain in the interval 90-400 (EKAQLQDLND…KLLEGEETRL (311 aa)). A coil 1A region spans residues 93–124 (QLQDLNDRFASFIERVHELEQQNKVLEAELLV). Positions 125–137 (LRQKHSEPSRFRA) are linker 1. Positions 138 to 234 (LYEQEIRDLR…KVHEEEIAEL (97 aa)) are coil 1B. The tract at residues 235 to 252 (QAQIQYAQISVEMDVTKP) is linker 12. A coil 2A region spans residues 253–271 (DLSAALKDIRAQYEKLAAK). A linker 2 region spans residues 272–280 (NMQNAEEWF). The interval 281-396 (KSRFTVLTES…AAYRKLLEGE (116 aa)) is coil 2B. The segment at 381–391 (ALDIEIAAYRK) is epitope; recognized by IF-specific monoclonal antibody. Residues 397 to 443 (ETRLSFTSVGSITSGYSQSSQVFGRSAYGGLQTSSYLMSTRSFPSYY) form a tail, subdomain A region. Residues 397–543 (ETRLSFTSVG…GEEQAAKKKD (147 aa)) are tail. The tail, subdomain B (acidic) stretch occupies residues 444-543 (TSHVQEEQIE…GEEQAAKKKD (100 aa)). The interval 462-543 (KAEEAKDEPP…GEEQAAKKKD (82 aa)) is disordered. Over residues 471-525 (PSEGEAEEEEKDKEEAEEEEAAEEEEAAKEESEEAKEEEEGGEGEEGEETKEAEE) the composition is skewed to acidic residues. A phosphoserine mark is found at S472 and S502. T520 is subject to Phosphothreonine. Basic and acidic residues predominate over residues 526 to 543 (EEKKVEGAGEEQAAKKKD).

The protein belongs to the intermediate filament family. In terms of assembly, forms homodimers (in vitro). Forms heterodimers with NEFH or NEFM; which can further hetero-oligomerize (in vitro). Forms heterodimers with INA (in vitro). Interacts with ARHGEF28. Interacts with TRIM2. In terms of processing, O-glycosylated. Phosphorylated in the head and rod regions by the PKC kinase PKN1, leading to the inhibition of polymerization. Post-translationally, ubiquitinated in the presence of TRIM2 and UBE2D1.

It localises to the cell projection. The protein localises to the axon. It is found in the cytoplasm. The protein resides in the cytoskeleton. Its function is as follows. Neurofilaments usually contain three intermediate filament proteins: NEFL, NEFM, and NEFH which are involved in the maintenance of neuronal caliber. May additionally cooperate with the neuronal intermediate filament proteins PRPH and INA to form neuronal filamentous networks. This chain is Neurofilament light polypeptide (NEFL), found in Homo sapiens (Human).